The sequence spans 228 residues: UPF0758 protein SH1266 (228 aa).

An MPN domain is found at 102–224 (KITSPSDVSN…YASLVEEGYF (123 aa)). H173, H175, and D186 together coordinate Zn(2+). A JAMM motif motif is present at residues 173–186 (HNHPSGDVTPSKED).

Belongs to the UPF0758 family.

The sequence is that of UPF0758 protein SH1266 from Staphylococcus haemolyticus (strain JCSC1435).